Reading from the N-terminus, the 143-residue chain is Large ribosomal subunit protein uL15 (143 aa).

A disordered region spans residues M1–E51. The segment covering R21–A31 has biased composition (gly residues).

The protein belongs to the universal ribosomal protein uL15 family. Part of the 50S ribosomal subunit.

In terms of biological role, binds to the 23S rRNA. This Thioalkalivibrio sulfidiphilus (strain HL-EbGR7) protein is Large ribosomal subunit protein uL15.